A 396-amino-acid chain; its full sequence is Elongation factor Tu (396 aa).

The region spanning 11 to 205 is the tr-type G domain; sequence KPHVNIGTIG…TVDEYVPTPE (195 aa). Positions 20-27 are G1; that stretch reads GHVDHGKT. 20-27 is a binding site for GTP; that stretch reads GHVDHGKT. Thr27 is a Mg(2+) binding site. The G2 stretch occupies residues 61 to 65; that stretch reads GITIN. Positions 82-85 are G3; it reads DAPG. GTP contacts are provided by residues 82–86 and 137–140; these read DAPGH and NKTD. The interval 137–140 is G4; the sequence is NKTD. Positions 175-177 are G5; it reads SAL.

Belongs to the TRAFAC class translation factor GTPase superfamily. Classic translation factor GTPase family. EF-Tu/EF-1A subfamily. In terms of assembly, monomer.

It is found in the cytoplasm. The enzyme catalyses GTP + H2O = GDP + phosphate + H(+). Its function is as follows. GTP hydrolase that promotes the GTP-dependent binding of aminoacyl-tRNA to the A-site of ribosomes during protein biosynthesis. The protein is Elongation factor Tu of Latilactobacillus sakei subsp. sakei (strain 23K) (Lactobacillus sakei subsp. sakei).